The following is a 139-amino-acid chain: Transcriptional regulator WhiB5 (139 aa).

The 74-residue stretch at 4–77 (PCATDPELWF…AGIKLPGGQY (74 aa)) folds into the 4Fe-4S Wbl-type domain. The [4Fe-4S] cluster site is built by C5, C41, C45, and C53.

Belongs to the WhiB family. Requires [4Fe-4S] cluster as cofactor. In terms of processing, the Fe-S cluster can be nitrosylated by nitric oxide (NO). Upon Fe-S cluster removal intramolecular disulfide bonds are formed.

It localises to the cytoplasm. Functionally, a transcription factor that is probably redox-responsive. Probably plays a role in immunomodulation and reactivation after chronic infection. Its induction results in transcription of a number of genes including sigM, and the genes for 2 type VII secretion systems ESX-2 and ESX-4. Seems to negatively regulate its own expression. The apo-form has been shown to act as a protein disulfide reductase. The apo- but not holo-form probably binds DNA. The sequence is that of Transcriptional regulator WhiB5 (whiB5) from Mycobacterium tuberculosis (strain ATCC 25618 / H37Rv).